A 311-amino-acid polypeptide reads, in one-letter code: tRNA(Ile)-lysidine synthase (311 aa).

Residue 32-37 coordinates ATP; that stretch reads SGGPDS.

It belongs to the tRNA(Ile)-lysidine synthase family.

Its subcellular location is the cytoplasm. It catalyses the reaction cytidine(34) in tRNA(Ile2) + L-lysine + ATP = lysidine(34) in tRNA(Ile2) + AMP + diphosphate + H(+). Its function is as follows. Ligates lysine onto the cytidine present at position 34 of the AUA codon-specific tRNA(Ile) that contains the anticodon CAU, in an ATP-dependent manner. Cytidine is converted to lysidine, thus changing the amino acid specificity of the tRNA from methionine to isoleucine. This is tRNA(Ile)-lysidine synthase from Cutibacterium acnes (strain DSM 16379 / KPA171202) (Propionibacterium acnes).